The primary structure comprises 217 residues: uncharacterized protein (217 aa).

This is an uncharacterized protein from Methanocaldococcus jannaschii (strain ATCC 43067 / DSM 2661 / JAL-1 / JCM 10045 / NBRC 100440) (Methanococcus jannaschii).